Consider the following 786-residue polypeptide: DNA repair and recombination protein RAD54-like (786 aa).

Residues 2-9 (RRSLAPSQ) form a required for chromatin remodeling, strand pairing activities and coupling of ATPase activity region. T22 carries the post-translational modification Phosphothreonine. One can recognise a Helicase ATP-binding domain in the interval 165-340 (EGKRGNFNGC…FSLVNFVNPE (176 aa)). Position 178-185 (178-185 (DEMGLGKT)) interacts with ATP. A DEGH box motif is present at residues 291 to 294 (DEGH). One can recognise a Helicase C-terminal domain in the interval 497 to 654 (LLDFMLAAIR…NNDSAEKHFT (158 aa)). Positions 740–786 (KQPTCITEDNHSEQPQLNSKRNANSVLENDDDEDFDPNSSDEKFLGF) are disordered. Polar residues predominate over residues 752–766 (EQPQLNSKRNANSVL).

It belongs to the SNF2/RAD54 helicase family. Interacts (via N-terminus) with spn-A/Rad51.

It is found in the nucleus. Functionally, involved in mitotic DNA repair and meiotic recombination. Functions in the recombinational DNA repair pathway. Essential for interhomolog gene conversion (GC), but may have a less important role in intersister GC than spn-A/Rad51. In the presence of DNA, spn-A/Rad51 enhances the ATPase activity of okr/Rad54. This chain is DNA repair and recombination protein RAD54-like, found in Drosophila virilis (Fruit fly).